We begin with the raw amino-acid sequence, 264 residues long: Small ribosomal subunit protein eS1 (264 aa).

Position 34 is an N6-acetyllysine; alternate (lysine 34). Residue lysine 34 forms a Glycyl lysine isopeptide (Lys-Gly) (interchain with G-Cter in SUMO2); alternate linkage. Lysine 56 carries the N6-acetyllysine modification. Tyrosine 155 bears the ADP-ribosyltyrosine mark. The segment at 232-264 (HGEGSSSGKATGDETGAKVERADGYEPPVQESV) is disordered. A phosphoserine mark is found at serine 236 and serine 237. Over residues 242-255 (TGDETGAKVERADG) the composition is skewed to basic and acidic residues. An N6-acetyllysine; alternate modification is found at lysine 249. A Glycyl lysine isopeptide (Lys-Gly) (interchain with G-Cter in SUMO2); alternate cross-link involves residue lysine 249. Tyrosine 256 bears the Phosphotyrosine mark. Position 263 is a phosphoserine (serine 263).

It belongs to the eukaryotic ribosomal protein eS1 family. Component of the small ribosomal subunit. Mature ribosomes consist of a small (40S) and a large (60S) subunit. The 40S subunit contains about 33 different proteins and 1 molecule of RNA (18S). The 60S subunit contains about 49 different proteins and 3 molecules of RNA (28S, 5.8S and 5S). Identified in a IGF2BP1-dependent mRNP granule complex containing untranslated mRNAs. Binds with high affinity to IPO4. Interacts with DDIT3. Part of the small subunit (SSU) processome, composed of more than 70 proteins and the RNA chaperone small nucleolar RNA (snoRNA) U3. In terms of processing, ADP-ribosylated at Tyr-155 by PARP1 in presence of HPF1.

It localises to the cytoplasm. The protein localises to the nucleus. The protein resides in the nucleolus. Component of the small ribosomal subunit. The ribosome is a large ribonucleoprotein complex responsible for the synthesis of proteins in the cell. Part of the small subunit (SSU) processome, first precursor of the small eukaryotic ribosomal subunit. During the assembly of the SSU processome in the nucleolus, many ribosome biogenesis factors, an RNA chaperone and ribosomal proteins associate with the nascent pre-rRNA and work in concert to generate RNA folding, modifications, rearrangements and cleavage as well as targeted degradation of pre-ribosomal RNA by the RNA exosome. May play a role during erythropoiesis through regulation of transcription factor DDIT3. This is Small ribosomal subunit protein eS1 from Macaca fascicularis (Crab-eating macaque).